A 148-amino-acid chain; its full sequence is Deoxyuridine 5'-triphosphate nucleotidohydrolase (148 aa).

Substrate is bound by residues 67 to 69 (RSG), N80, 84 to 86 (TID), and K94.

It belongs to the dUTPase family. Requires Mg(2+) as cofactor.

It carries out the reaction dUTP + H2O = dUMP + diphosphate + H(+). The protein operates within pyrimidine metabolism; dUMP biosynthesis; dUMP from dCTP (dUTP route): step 2/2. This enzyme is involved in nucleotide metabolism: it produces dUMP, the immediate precursor of thymidine nucleotides and it decreases the intracellular concentration of dUTP so that uracil cannot be incorporated into DNA. The protein is Deoxyuridine 5'-triphosphate nucleotidohydrolase of Orientia tsutsugamushi (strain Ikeda) (Rickettsia tsutsugamushi).